The following is a 175-amino-acid chain: Translation initiation factor IF-3 (175 aa).

The protein belongs to the IF-3 family. As to quaternary structure, monomer.

Its subcellular location is the cytoplasm. Functionally, IF-3 binds to the 30S ribosomal subunit and shifts the equilibrium between 70S ribosomes and their 50S and 30S subunits in favor of the free subunits, thus enhancing the availability of 30S subunits on which protein synthesis initiation begins. The polypeptide is Translation initiation factor IF-3 (Chromobacterium violaceum (strain ATCC 12472 / DSM 30191 / JCM 1249 / CCUG 213 / NBRC 12614 / NCIMB 9131 / NCTC 9757 / MK)).